The following is a 412-amino-acid chain: MSLQNFDPAIARLIDRERNRQETHLELIASENYVSEEVLQAQGSLLTNKYAEGYPGRRYYGGCKVVDEIENLAIERARKLFGCEYVNVQPHSGSQANQAVFLAVLEPGDRILGMSLAHGGHLTHGASVNFSGKFFQAFTYGLEKDSETLDYDQMEDLAREHRPKMIIAGASAYSRVIDFPRFRKICDEIGAYLMVDMAHYAGLIAAGVYPSPVGIADFITSTTHKTLRGPRGGLILAKAEYAAVLDKTIFPVYQGGPLMHVIAAKAVAFNEALGDEFKHYQQRVINNARTMADVLTRRGLRVVSGGTDCHMFLLDLRAMNITGKDAEALLESAHITLNKNAIPDDPQKPAITSGIRIGTPALTTRGFGEAECAEVANLIADLLEQPDNTARVENIRRRVMHLCECFPVYLLT.

(6S)-5,6,7,8-tetrahydrofolate is bound by residues Leu-116 and 120–122 (GHL). The residue at position 225 (Lys-225) is an N6-(pyridoxal phosphate)lysine.

The protein belongs to the SHMT family. As to quaternary structure, homodimer. The cofactor is pyridoxal 5'-phosphate.

The protein localises to the cytoplasm. The catalysed reaction is (6R)-5,10-methylene-5,6,7,8-tetrahydrofolate + glycine + H2O = (6S)-5,6,7,8-tetrahydrofolate + L-serine. It functions in the pathway one-carbon metabolism; tetrahydrofolate interconversion. The protein operates within amino-acid biosynthesis; glycine biosynthesis; glycine from L-serine: step 1/1. Catalyzes the reversible interconversion of serine and glycine with tetrahydrofolate (THF) serving as the one-carbon carrier. This reaction serves as the major source of one-carbon groups required for the biosynthesis of purines, thymidylate, methionine, and other important biomolecules. Also exhibits THF-independent aldolase activity toward beta-hydroxyamino acids, producing glycine and aldehydes, via a retro-aldol mechanism. In Pseudomonas fluorescens (strain Pf0-1), this protein is Serine hydroxymethyltransferase 1.